A 410-amino-acid polypeptide reads, in one-letter code: Peptidase T (410 aa).

A Zn(2+)-binding site is contributed by His-79. Residue Asp-81 is part of the active site. Asp-142 is a binding site for Zn(2+). The active-site Proton acceptor is Glu-176. Zn(2+)-binding residues include Glu-177, Asp-199, and His-381.

Belongs to the peptidase M20B family. Zn(2+) serves as cofactor.

It is found in the cytoplasm. It carries out the reaction Release of the N-terminal residue from a tripeptide.. Functionally, cleaves the N-terminal amino acid of tripeptides. The chain is Peptidase T from Bacillus thuringiensis subsp. konkukian (strain 97-27).